Reading from the N-terminus, the 88-residue chain is Synaptonemal complex central element protein 3 (88 aa).

Positions 7–75 (EERNYDNMLK…FVNCKEEMEK (69 aa)) form a coiled coil.

In terms of assembly, homodimer. Can form higher-order homooligomers. Interacts with SYCP1 (via tetrameric core); the interaction remodels SYCP1 homotetramers to 2:1 heterotrimers with SYCE3. SYCP1/SYCE3 heterotrimers form lattice assemblies as part of the mature synaptonemal complex via both lateral and head-to-head interactions. Interacts with the SYCE1-SIX6OS1 complex; the interaction recruits the SYCE1-SIX6OS1 complex to the central element of the synaptonemal complex. Interacts with the SYCE2-TEX12 complex; the interaction promotes fibrous assembly of SYCE2-TEX12 as part of the synaptonemal complex central element. Interacts with SYCE1. Interacts with SYCE2. Interacts with proteasome subunit PSMA8; to participate in meiosis progression during spermatogenesis. Interacts with SPO16.

It localises to the nucleus. The protein resides in the chromosome. In terms of biological role, major component of the transverse central element of synaptonemal complexes (SCS), formed between homologous chromosomes during meiotic prophase. Required for the assembly of the central element of the synaptonemal complex during meiosis, via remodeling of SYCP1 lattice structures and promoting recruitment of SYCE2-TEX12 and SYCE1-SIX60S1 complexes. Required for chromosome loading of the central element-specific SCS proteins, and for initiating synapsis between homologous chromosomes. Chromosome loading appears to require SYCP1. Required for fertility and normal testis development. The sequence is that of Synaptonemal complex central element protein 3 from Homo sapiens (Human).